We begin with the raw amino-acid sequence, 561 residues long: Arginine--tRNA ligase (561 aa).

Residues A128–H138 carry the 'HIGH' region motif.

Belongs to the class-I aminoacyl-tRNA synthetase family. In terms of assembly, monomer.

The protein resides in the cytoplasm. It carries out the reaction tRNA(Arg) + L-arginine + ATP = L-arginyl-tRNA(Arg) + AMP + diphosphate. The polypeptide is Arginine--tRNA ligase (Chromohalobacter salexigens (strain ATCC BAA-138 / DSM 3043 / CIP 106854 / NCIMB 13768 / 1H11)).